A 181-amino-acid chain; its full sequence is Adenylate kinase (181 aa).

Residue 10–15 coordinates ATP; the sequence is GAGKGT. The segment at 30-59 is NMP; it reads STGELFRRNIEEGTKLGVEAKRYLDAGDLV. Residues Thr-31, Arg-36, 57–59, 85–88, and Gln-92 contribute to the AMP site; these read DLV and GYPR. The tract at residues 126 to 132 is LID; it reads GRGRADD. Position 127 (Arg-127) interacts with ATP. AMP is bound by residues Arg-129 and Arg-140. Gly-166 lines the ATP pocket.

This sequence belongs to the adenylate kinase family. Monomer.

Its subcellular location is the cytoplasm. It carries out the reaction AMP + ATP = 2 ADP. It participates in purine metabolism; AMP biosynthesis via salvage pathway; AMP from ADP: step 1/1. Catalyzes the reversible transfer of the terminal phosphate group between ATP and AMP. Plays an important role in cellular energy homeostasis and in adenine nucleotide metabolism. The polypeptide is Adenylate kinase (Mycobacterium tuberculosis (strain ATCC 25177 / H37Ra)).